Reading from the N-terminus, the 373-residue chain is 3 beta-hydroxysteroid dehydrogenase/Delta 5--&gt;4-isomerase type 1 (373 aa).

Residues 10-15, Tyr-155, and Lys-159 each bind NADP(+); that span reads GAGGFL. Lys-159 acts as the Proton donor in catalysis. A helical transmembrane segment spans residues 288-308; it reads LSLMYWIGFLLEIVSFLLRPI.

The protein belongs to the 3-beta-HSD family. In terms of tissue distribution, placenta and skin. Predominantly expressed in mammary gland tissue.

Its subcellular location is the endoplasmic reticulum membrane. The protein resides in the mitochondrion membrane. The catalysed reaction is a 3beta-hydroxy-Delta(5)-steroid + NAD(+) = a 3-oxo-Delta(5)-steroid + NADH + H(+). It carries out the reaction pregnenolone + NAD(+) = pregn-5-ene-3,20-dione + NADH + H(+). It catalyses the reaction 3beta-hydroxyandrost-5-en-17-one + NAD(+) = androst-5-ene-3,17-dione + NADH + H(+). The enzyme catalyses androst-5-en-3beta,17beta-diol + NAD(+) = 17beta-hydroxy-androst-5-en-3-one + NADH + H(+). The catalysed reaction is a 3beta-hydroxysteroid + NADP(+) = a 3-oxosteroid + NADPH + H(+). It carries out the reaction 5alpha-androstane-3beta,17beta-diol + NADP(+) = 17beta-hydroxy-5alpha-androstan-3-one + NADPH + H(+). It catalyses the reaction 3beta-hydroxy-5alpha-androstan-17-one + NADP(+) = 5alpha-androstan-3,17-dione + NADPH + H(+). The enzyme catalyses a 3-oxo-Delta(5)-steroid = a 3-oxo-Delta(4)-steroid. The catalysed reaction is pregn-5-ene-3,20-dione = progesterone. It carries out the reaction androst-5-ene-3,17-dione = androst-4-ene-3,17-dione. It catalyses the reaction 17beta-hydroxy-androst-5-en-3-one = testosterone. The enzyme catalyses 5alpha-androstane-3beta,17beta-diol + NAD(+) = 17beta-hydroxy-5alpha-androstan-3-one + NADH + H(+). It participates in steroid hormone biosynthesis. Its pathway is steroid metabolism. Functionally, a bifunctional enzyme responsible for the oxidation and isomerization of 3beta-hydroxy-Delta(5)-steroid precursors to 3-oxo-Delta(4)-steroids, an essential step in steroid hormone biosynthesis. Specifically catalyzes the conversion of pregnenolone to progesterone, 17alpha-hydroxypregnenolone to 17alpha-hydroxyprogesterone, dehydroepiandrosterone (DHEA) to 4-androstenedione, and androstenediol to testosterone. Additionally, catalyzes the interconversion between 3beta-hydroxy and 3-oxo-5alpha-androstane steroids controlling the bioavalability of the active forms. Specifically converts dihydrotestosterone to its inactive form 5alpha-androstanediol, that does not bind androgen receptor/AR. Also converts androstanedione, a precursor of testosterone and estrone, to epiandrosterone. Expected to use NAD(+) as preferred electron donor for the 3beta-hydroxy-steroid dehydrogenase activity and NADPH for the 3-ketosteroid reductase activity. This is 3 beta-hydroxysteroid dehydrogenase/Delta 5--&gt;4-isomerase type 1 from Homo sapiens (Human).